Reading from the N-terminus, the 59-residue chain is UPF0434 protein SO_2800 (59 aa).

This sequence belongs to the UPF0434 family.

This is UPF0434 protein SO_2800 from Shewanella oneidensis (strain ATCC 700550 / JCM 31522 / CIP 106686 / LMG 19005 / NCIMB 14063 / MR-1).